We begin with the raw amino-acid sequence, 440 residues long: Ribosomal protein uS12 methylthiotransferase RimO (440 aa).

One can recognise an MTTase N-terminal domain in the interval 8–118 (PTVGFVSLGC…VMGIVHTHLP (111 aa)). [4Fe-4S] cluster is bound by residues cysteine 17, cysteine 53, cysteine 82, cysteine 149, cysteine 153, and cysteine 156. The region spanning 135-372 (LTPDHFAYLK…MQVQEDISAD (238 aa)) is the Radical SAM core domain. The TRAM domain maps to 375–440 (AAKIDTVIQV…DHHDLYAQVV (66 aa)).

It belongs to the methylthiotransferase family. RimO subfamily. The cofactor is [4Fe-4S] cluster.

It is found in the cytoplasm. It catalyses the reaction L-aspartate(89)-[ribosomal protein uS12]-hydrogen + (sulfur carrier)-SH + AH2 + 2 S-adenosyl-L-methionine = 3-methylsulfanyl-L-aspartate(89)-[ribosomal protein uS12]-hydrogen + (sulfur carrier)-H + 5'-deoxyadenosine + L-methionine + A + S-adenosyl-L-homocysteine + 2 H(+). Functionally, catalyzes the methylthiolation of an aspartic acid residue of ribosomal protein uS12. This chain is Ribosomal protein uS12 methylthiotransferase RimO, found in Dechloromonas aromatica (strain RCB).